Reading from the N-terminus, the 757-residue chain is Tyrosine-protein kinase HTK16 (757 aa).

The 93-residue stretch at 10–102 folds into the SH2 1 domain; it reads WYHGKITREV…GLPCKLVDFC (93 aa). 5 ANK repeats span residues 115–147, 151–180, 184–214, 219–248, and 252–281; these read GLDT…NVNA, SGLT…DASA, NGRT…DFLK, NGWV…SMYP, and DGDT…NQPK. The 93-residue stretch at 287–379 folds into the SH2 2 domain; the sequence is WLHQNLDRNG…GLPTLLQFPV (93 aa). 2 disordered regions span residues 381–407 and 444–467; these read SAEN…PSRP and PKLP…QKGD. The span at 455–467 shows a compositional bias: polar residues; it reads EVPNSVNVGQKGD. The region spanning 484-740 is the Protein kinase domain; the sequence is ISFGKELGVG…PTFNELHSTF (257 aa). ATP-binding positions include 490–498 and K516; that span reads LGVGEFGSV. The active-site Proton acceptor is the D608. Phosphotyrosine is present on Y746.

The protein belongs to the protein kinase superfamily. Tyr protein kinase family. In terms of tissue distribution, epithelial cells.

The enzyme catalyses L-tyrosyl-[protein] + ATP = O-phospho-L-tyrosyl-[protein] + ADP + H(+). Its function is as follows. May be involved in signal transduction. The chain is Tyrosine-protein kinase HTK16 (HTK16) from Hydra vulgaris (Hydra).